The primary structure comprises 337 residues: C5a anaphylatoxin chemotactic receptor 2 (337 aa).

The Extracellular portion of the chain corresponds to 1-38; it reads MGNDSVSYEYGDYSDLSDRPVDCLDGACLAIDPLRVAP. The N-linked (GlcNAc...) asparagine glycan is linked to Asn-3. The helical transmembrane segment at 39-61 threads the bilayer; sequence LPLYAAIFLVGVPGNAMVAWVAG. The Cytoplasmic portion of the chain corresponds to 62 to 72; it reads KVARRRVGATW. The helical transmembrane segment at 73–95 threads the bilayer; sequence LLHLAVADLLCCLSLPILAVPIA. At 96–114 the chain is on the extracellular side; it reads RGGHWPYGAVGCRALPSII. Cys-107 and Cys-186 form a disulfide bridge. Residues 115 to 137 form a helical membrane-spanning segment; that stretch reads LLTMYASVLLLAALSADLCFLAL. The Cytoplasmic segment spans residues 138–149; the sequence is GPAWWSTVQRAC. The chain crosses the membrane as a helical span at residues 150 to 172; that stretch reads GVQVACGAAWTLALLLTVPSAIY. Topologically, residues 173-202 are extracellular; sequence RRLHQEHFPARLQCVVDYGGSSSTENAVTA. The helical transmembrane segment at 203-225 threads the bilayer; sequence IRFLFGFLGPLVAVASCHSALLC. The Cytoplasmic segment spans residues 226–237; the sequence is WAARRCRPLGTA. Residues 238–260 form a helical membrane-spanning segment; it reads IVVGFFVCWAPYHLLGLVLTVAA. The Extracellular segment spans residues 261-274; sequence PNSALLARALRAEP. A helical transmembrane segment spans residues 275–294; the sequence is LIVGLALAHSCLNPMLFLYF. Over 295 to 337 the chain is Cytoplasmic; sequence GRAQLRRSLPAACHWALRESQGQDESVDSKKSTSHDLVSEMEV. Residue Ser-320 is modified to Phosphoserine.

The protein belongs to the G-protein coupled receptor 1 family. In terms of assembly, interacts with C3 (the anaphylatoxin peptide C3a and the adipogenic hormone ASP); the interaction occurs with higher affinity for ASP, enhancing the phosphorylation and activation of GPR77, recruitment of ARRB2 to the cell surface and endocytosis of GRP77. In terms of tissue distribution, frontal cortex, hippocampus, hypothalamus, pons and liver.

It is found in the cell membrane. Its function is as follows. Receptor for the chemotactic and inflammatory C3a, C4a and C5a anaphylatoxin peptides and also for their dearginated forms ASP/C3adesArg, C4adesArg and C5adesArg respectively. Couples weakly to G(i)-mediated signaling pathways. In Homo sapiens (Human), this protein is C5a anaphylatoxin chemotactic receptor 2 (C5AR2).